Reading from the N-terminus, the 213-residue chain is Cysteine dioxygenase (213 aa).

Fe cation is bound by residues histidine 100, histidine 102, and histidine 160. The segment at residues 107–177 is a cross-link (3'-(S-cysteinyl)-tyrosine (Cys-Tyr)); that stretch reads CVMKVLKGSL…TNFAISLHLY (71 aa).

Belongs to the cysteine dioxygenase family. The cofactor is Fe cation. In terms of processing, the thioether cross-link between Cys-107 and Tyr-177 plays a structural role through stabilizing the Fe(2+) ion, and prevents the production of highly damaging free hydroxyl radicals by holding the oxygen radical via hydroxyl hydrogen.

It carries out the reaction L-cysteine + O2 = 3-sulfino-L-alanine + H(+). This is Cysteine dioxygenase (CDO1) from Ajellomyces capsulatus (strain G186AR / H82 / ATCC MYA-2454 / RMSCC 2432) (Darling's disease fungus).